The following is a 74-amino-acid chain: Peptide BmKb1 (74 aa).

The signal sequence occupies residues 1–22 (MEIKYLLTVFLVLLIVSDHCQA). Residue K40 is modified to Lysine amide. Residues 46–74 (DLNGYIDHFKNFRKRDAELEELLSKLPIY) constitute a propeptide that is removed on maturation.

Belongs to the non-disulfide-bridged peptide (NDBP) superfamily. Short antimicrobial peptide (group 4) family. In terms of tissue distribution, expressed by the venom gland.

The protein resides in the secreted. It is found in the target cell membrane. In terms of biological role, has antibacterial activity against Gram-positive bacteria S.aureus, M.luteus, B.subtilis, and Gram-negative bacteria E.coli, and P.aeruginosa. The protein is Peptide BmKb1 of Olivierus martensii (Manchurian scorpion).